The chain runs to 547 residues: MSAKEVKFGVDARDRMLRGVDILANAVKVTLGPKGRNVVLDKSFGAPRITKDGVTVAKEIELEDKFENMGAQMVREVASKSADLAGDGTTTATVLAAAIVREGAKSVAAGMNPMDLKRGIDLAVEAVVADLVKNSKKVTSNEEIAQVGTISANGDAEIGKFLSDAMKKVGNEGVITVEEAKSLETELDVVEGMQFDRGYISPYFVTNADKMRVEFDDAYILINEKKLSNLNELLPLLEAVVQTGKPLVIVAEDVEGEALATLVVNRLRGGLKVAAVKAPGFGDRRKAMLQDIAILTGGQAISEDLGIKMENVTLAMLGKAKKVMIDKENTTIVNGAGKKADIEARVAQIKAQIEETTSDYDREKLQERLAKLAGGVAVIRVGGATEIEVKERKDRVDDAMHATRAAVEEGILPGGGVALLRASEQLKRIKTQNDDQKTGVEIVRKALSWPARQIAINAGEDGSVIVGKILEKDQYSYGFDSQSGEYGDMVKKGIIDPTKVVRAAIQNAASVAALLITTEAMIAELPKKGNAGGGMPPGGGGMGGMDF.

ATP contacts are provided by residues 30-33 (TLGP), K51, 87-91 (DGTTT), G415, and D496.

It belongs to the chaperonin (HSP60) family. In terms of assembly, forms a cylinder of 14 subunits composed of two heptameric rings stacked back-to-back. Interacts with the co-chaperonin GroES.

Its subcellular location is the cytoplasm. The enzyme catalyses ATP + H2O + a folded polypeptide = ADP + phosphate + an unfolded polypeptide.. Together with its co-chaperonin GroES, plays an essential role in assisting protein folding. The GroEL-GroES system forms a nano-cage that allows encapsulation of the non-native substrate proteins and provides a physical environment optimized to promote and accelerate protein folding. This is Chaperonin GroEL 1 from Rhodopseudomonas palustris (strain BisB18).